Here is a 113-residue protein sequence, read N- to C-terminus: Nucleoid-associated protein Syncc9605_0027 (113 aa).

The protein belongs to the YbaB/EbfC family. As to quaternary structure, homodimer.

It localises to the cytoplasm. The protein resides in the nucleoid. Functionally, binds to DNA and alters its conformation. May be involved in regulation of gene expression, nucleoid organization and DNA protection. This Synechococcus sp. (strain CC9605) protein is Nucleoid-associated protein Syncc9605_0027.